The sequence spans 105 residues: Thioredoxin (105 aa).

The 105-residue stretch at 1–105 folds into the Thioredoxin domain; it reads VQVISSYDQF…LQAAITQHSA (105 aa). Catalysis depends on nucleophile residues Cys-29 and Cys-32. Cys-29 and Cys-32 are disulfide-bonded.

This sequence belongs to the thioredoxin family. In terms of assembly, monomer.

Participates in various redox reactions through the reversible oxidation of its active center dithiol to a disulfide and catalyzes dithiol-disulfide exchange reactions. This Malassezia sympodialis (Atopic eczema-associated yeast) protein is Thioredoxin.